A 173-amino-acid polypeptide reads, in one-letter code: Signal peptidase complex catalytic subunit SEC11 (173 aa).

At 1-15 (MLGVSGMQPRQLAAQ) the chain is on the cytoplasmic side. A helical; Signal-anchor for type II membrane protein transmembrane segment spans residues 16–36 (ILNFALVLSTAFMMWKGLSVV). Topologically, residues 37–173 (SDSSSPIVVV…MGVMVVLQRE (137 aa)) are lumenal. Catalysis depends on charge relay system residues Ser50, His89, and Asp115. Residues 159–170 (VMLGLMGVMVVL) form a C-terminal short (CTS) helix region.

Belongs to the peptidase S26B family. Component of the signal peptidase complex (SPC) composed of a catalytic subunit SEC11 and three accessory subunits SPC1, SPC2 and SPC3. The complex induces a local thinning of the ER membrane which is used to measure the length of the signal peptide (SP) h-region of protein substrates. This ensures the selectivity of the complex towards h-regions shorter than 18-20 amino acids. SPC associates with the translocon complex.

The protein resides in the endoplasmic reticulum membrane. It carries out the reaction Cleavage of hydrophobic, N-terminal signal or leader sequences from secreted and periplasmic proteins.. Catalytic component of the signal peptidase complex (SPC) which catalyzes the cleavage of N-terminal signal sequences from nascent proteins as they are translocated into the lumen of the endoplasmic reticulum. Specifically cleaves N-terminal signal peptides that contain a hydrophobic alpha-helix (h-region) shorter than 18-20 amino acids. The polypeptide is Signal peptidase complex catalytic subunit SEC11 (SEC11) (Leptosphaeria maculans (strain JN3 / isolate v23.1.3 / race Av1-4-5-6-7-8) (Blackleg fungus)).